Consider the following 273-residue polypeptide: Protein ALUMINUM SENSITIVE 3 (273 aa).

7 consecutive transmembrane segments (helical) span residues 14–34, 51–71, 76–96, 107–127, 136–156, 191–213, and 228–248; these read WLIV…VVLL, IYSV…LQFI, NSGW…YTAG, YVAG…LVLL, YMIP…GVTM, ALVI…SLPG, and AIQL…VSSI.

It belongs to the UPF0014 family. As to expression, expressed in roots, leaves, stems, and flowers.

It localises to the cell membrane. Required for aluminum (Al) resistance/tolerance, probably by translocating Al from sensitive tissues such as growing roots to tissues less sensisitive to the toxic effects of Al. The chain is Protein ALUMINUM SENSITIVE 3 (ALS3) from Arabidopsis thaliana (Mouse-ear cress).